The chain runs to 377 residues: Cilia- and flagella-associated protein 263 (377 aa).

Coiled coils occupy residues 95 to 243 (LTAD…NQEL) and 280 to 354 (LRKE…SLKG).

This sequence belongs to the CFAP263 family. As to quaternary structure, forms a complex with CFAP184; the interaction is required for functional activity in cilia. Interacts with HAP1 and PCM1.

The protein localises to the cytoplasm. It is found in the cytoskeleton. Its subcellular location is the microtubule organizing center. The protein resides in the centrosome. It localises to the centriolar satellite. The protein localises to the cell projection. It is found in the cilium. Functionally, component of centriolar satellites contributing to primary cilium formation. In complex with CFAP263, acts as a regulator of ciliary beating that connects radial spoke 3 (RS3) to the inner dynein arm (IDA) and the nexin-dynein regulatory complex (N-DRC). The complex is positioned parallel to N-DRC and forms a connection between the arch at the base of RS3, the IDA tail and N-DRC. This is Cilia- and flagella-associated protein 263 from Homo sapiens (Human).